Consider the following 275-residue polypeptide: 2,3,4,5-tetrahydropyridine-2,6-dicarboxylate N-succinyltransferase (275 aa).

Substrate contacts are provided by Arg108 and Asp145.

Belongs to the transferase hexapeptide repeat family. As to quaternary structure, homotrimer.

The protein resides in the cytoplasm. The enzyme catalyses (S)-2,3,4,5-tetrahydrodipicolinate + succinyl-CoA + H2O = (S)-2-succinylamino-6-oxoheptanedioate + CoA. It participates in amino-acid biosynthesis; L-lysine biosynthesis via DAP pathway; LL-2,6-diaminopimelate from (S)-tetrahydrodipicolinate (succinylase route): step 1/3. In Jannaschia sp. (strain CCS1), this protein is 2,3,4,5-tetrahydropyridine-2,6-dicarboxylate N-succinyltransferase.